Here is a 556-residue protein sequence, read N- to C-terminus: Testis-specific protein 10-interacting protein (556 aa).

The span at 1 to 16 (MGQDTDMLNTYQQLVR) shows a compositional bias: polar residues. Disordered stretches follow at residues 1–31 (MGQD…LQAP), 50–102 (GCLG…LLPR), 123–155 (LQPS…ANLP), and 179–309 (GGVS…QWRK). A compositionally biased stretch (polar residues) spans 208-219 (GSASDKQVQLQS). Residues 244-258 (SEEEQFSEATEEAEE) show a composition bias toward acidic residues. Polar residues predominate over residues 289-301 (QGQSQGSSPSFNN). A coiled-coil region spans residues 379–464 (RQEATRSLLQ…LQGIQHRVQA (86 aa)). The segment at 503 to 556 (AGKVDREGTPRKPRSHRSMGVRMEHSPQRPPRTEPTGSQPDRHYNPSLDPECSP) is disordered.

The chain is Testis-specific protein 10-interacting protein (TSGA10IP) from Homo sapiens (Human).